Consider the following 1159-residue polypeptide: DNA-directed RNA polymerase subunit beta (1159 aa).

This sequence belongs to the RNA polymerase beta chain family. In terms of assembly, the RNAP catalytic core consists of 2 alpha, 1 beta, 1 beta' and 1 omega subunit. When a sigma factor is associated with the core the holoenzyme is formed, which can initiate transcription.

It carries out the reaction RNA(n) + a ribonucleoside 5'-triphosphate = RNA(n+1) + diphosphate. Its function is as follows. DNA-dependent RNA polymerase catalyzes the transcription of DNA into RNA using the four ribonucleoside triphosphates as substrates. This chain is DNA-directed RNA polymerase subunit beta, found in Deinococcus radiodurans (strain ATCC 13939 / DSM 20539 / JCM 16871 / CCUG 27074 / LMG 4051 / NBRC 15346 / NCIMB 9279 / VKM B-1422 / R1).